The chain runs to 891 residues: Alanine--tRNA ligase (891 aa).

H564, H568, C677, and H681 together coordinate Zn(2+).

It belongs to the class-II aminoacyl-tRNA synthetase family. Zn(2+) serves as cofactor.

Its subcellular location is the cytoplasm. The catalysed reaction is tRNA(Ala) + L-alanine + ATP = L-alanyl-tRNA(Ala) + AMP + diphosphate. Its function is as follows. Catalyzes the attachment of alanine to tRNA(Ala) in a two-step reaction: alanine is first activated by ATP to form Ala-AMP and then transferred to the acceptor end of tRNA(Ala). Also edits incorrectly charged Ser-tRNA(Ala) and Gly-tRNA(Ala) via its editing domain. This Rhodopseudomonas palustris (strain BisA53) protein is Alanine--tRNA ligase.